The following is a 358-amino-acid chain: Snurportin-1 (358 aa).

Methionine 1 is subject to N-acetylmethionine. Disordered regions lie at residues 1–39 (MEELSQALASSFSVSQELNSTAAPHPRLSQYKSKYSSLE) and 69–89 (DWTGMESGEEEKKKDEEEMDL). Positions 1 to 65 (MEELSQALAS…LDYVNHARRL (65 aa)) are necessary for interaction with KPNB1 and m3G-cap U1 and U5 snRNP import receptor activity. The tract at residues 1 to 160 (MEELSQALAS…NRFSSLLPGG (160 aa)) is necessary for interaction with XPO1. 2 stretches are compositionally biased toward polar residues: residues 7-22 (ALASSFSVSQELNSTA) and 30-39 (QYKSKYSSLE). Positions 11–73 (SFSVSQELNS…RLAEDDWTGM (63 aa)) constitute an IBB domain. At serine 75 the chain carries Phosphoserine. The tract at residues 128–130 (GKR) is interaction with m3G-cap structure. The tract at residues 210 to 329 (MNSKLPEEEG…DTKEKLTHKA (120 aa)) is necessary for binding to the m3G-cap structure. Over residues 315–341 (KRSQEDTKEKLTHKASENGHYELEHLS) the composition is skewed to basic and acidic residues. A disordered region spans residues 315 to 358 (KRSQEDTKEKLTHKASENGHYELEHLSTPKLRSPPHSSESLMDS). Residues 349–358 (PHSSESLMDS) are compositionally biased toward polar residues. The residue at position 351 (serine 351) is a Phosphoserine.

Belongs to the snurportin family. In terms of assembly, component of an import snRNP complex composed of KPNB1, SNUPN, SMN1 and ZNF259. Component of a nuclear export receptor complex composed of KPNB1, Ran, SNUPN and XPO1. Found in a trimeric export complex with SNUPN, Ran and XPO1. Interacts (via IBB domain) with KPNB1; the interaction is direct. Interacts with DDX20, IPO7, SMN1, SNRPB and XPO1. Interacts directly with XPO1. Its interaction with XPO1 and binding to m3G-cap U snRNPs appears to be mutually exclusive. Can form homomers.

It is found in the nucleus. The protein localises to the cytoplasm. In terms of biological role, functions as an U snRNP-specific nuclear import adapter. Involved in the trimethylguanosine (m3G)-cap-dependent nuclear import of U snRNPs. Binds specifically to the terminal m3G-cap U snRNAs. In Rattus norvegicus (Rat), this protein is Snurportin-1 (Snupn).